Here is a 227-residue protein sequence, read N- to C-terminus: Octanoyltransferase (227 aa).

Residues 47–223 enclose the BPL/LPL catalytic domain; sequence EDTADEIWLL…HLLRLLPPGV (177 aa). Substrate contacts are provided by residues 87–94, 154–156, and 167–169; these read RGGQITYH, ALG, and GLA. The active-site Acyl-thioester intermediate is the C185.

It belongs to the LipB family.

The protein localises to the cytoplasm. The enzyme catalyses octanoyl-[ACP] + L-lysyl-[protein] = N(6)-octanoyl-L-lysyl-[protein] + holo-[ACP] + H(+). Its pathway is protein modification; protein lipoylation via endogenous pathway; protein N(6)-(lipoyl)lysine from octanoyl-[acyl-carrier-protein]: step 1/2. Functionally, catalyzes the transfer of endogenously produced octanoic acid from octanoyl-acyl-carrier-protein onto the lipoyl domains of lipoate-dependent enzymes. Lipoyl-ACP can also act as a substrate although octanoyl-ACP is likely to be the physiological substrate. The polypeptide is Octanoyltransferase (Azoarcus sp. (strain BH72)).